The primary structure comprises 522 residues: Sorting nexin-1 (522 aa).

Disordered regions lie at residues 1–84 (MASG…QDQE) and 115–142 (SLPP…QEDQ). Phosphoserine occurs at positions 32 and 39. Residues 35–45 (EAGDSDTEGED) are compositionally biased toward acidic residues. 2 positions are modified to phosphothreonine: Thr41 and Thr48. A compositionally biased stretch (polar residues) spans 55–73 (KHQSPKITTSLLPINNGSK). Residues Ser58 and Ser72 each carry the phosphoserine modification. Acidic residues predominate over residues 132-142 (EELEEEEQEDQ). The region spanning 143–272 (FDLTVGITDP…EFLEKEELPR (130 aa)) is the PX domain. Residues Arg186, Ser188, and Lys214 each coordinate a 1,2-diacyl-sn-glycero-3-phospho-(1D-myo-inositol-3-phosphate). Phosphoserine is present on Ser188. Residue Lys237 is modified to N6-acetyllysine. Arg238 provides a ligand contact to a 1,2-diacyl-sn-glycero-3-phospho-(1D-myo-inositol-3-phosphate). A Phosphoserine modification is found at Ser280. The membrane-binding amphipathic helix stretch occupies residues 281–298 (GAGLLKMFNKATDAVSKM). A BAR domain is found at 302-522 (MNESDIWFEE…AFLPEAKAIS (221 aa)).

The protein belongs to the sorting nexin family. In terms of assembly, predominantly forms heterodimers with BAR domain-containing sorting nexins SNX5, SNX6 and SNX32; can self-associate to form homodimers. The heterodimers are proposed to self-assemble into helical arrays on the membrane to stabilize and expand local membrane curvature underlying endosomal tubule formation. Thought to be a component of the originally described retromer complex (also called SNX-BAR retromer) which is a pentamer containing the heterotrimeric retromer cargo-selective complex (CSC), also described as vacuolar protein sorting subcomplex (VPS) and a heterodimeric membrane-deforming subcomplex formed between SNX1 or SNX2 and SNX5 or SNX6 (also called SNX-BAR subcomplex); the respective CSC and SNX-BAR subcomplexes associate with low affinity. Interacts with SNX5, SNX6, SNX32, VPS26A, VPS29, VPS35, DRD5, DENND5A, KALRN, RHOG (GDP-bound form). The interaction with SNX2 is reported controversially. Interacts with DNAJC13; prevented by presence of HGS. Interacts with HGS.

Its subcellular location is the endosome membrane. It is found in the golgi apparatus. It localises to the trans-Golgi network membrane. The protein localises to the early endosome membrane. The protein resides in the cell projection. Its subcellular location is the lamellipodium. In terms of biological role, involved in several stages of intracellular trafficking. Interacts with membranes containing phosphatidylinositol 3-phosphate (PtdIns(3P)) or phosphatidylinositol 3,5-bisphosphate (PtdIns(3,5)P2). Acts in part as component of the retromer membrane-deforming SNX-BAR subcomplex. The SNX-BAR retromer mediates retrograde transport of cargo proteins from endosomes to the trans-Golgi network (TGN) and is involved in endosome-to-plasma membrane transport for cargo protein recycling. The SNX-BAR subcomplex functions to deform the donor membrane into a tubular profile called endosome-to-TGN transport carrier (ETC). Can sense membrane curvature and has in vitro vesicle-to-membrane remodeling activity. Involved in retrograde endosome-to-TGN transport of lysosomal enzyme receptors (IGF2R, M6PR and SORT1) and Shiginella dysenteria toxin stxB. Plays a role in targeting ligand-activated EGFR to the lysosomes for degradation after endocytosis from the cell surface and release from the Golgi. Involvement in retromer-independent endocytic trafficking of P2RY1 and lysosomal degradation of protease-activated receptor-1/F2R. Promotes KALRN- and RHOG-dependent but retromer-independent membrane remodeling such as lamellipodium formation; the function is dependent on GEF activity of KALRN. Required for endocytosis of DRD5 upon agonist stimulation but not for basal receptor trafficking. The polypeptide is Sorting nexin-1 (SNX1) (Homo sapiens (Human)).